Here is a 481-residue protein sequence, read N- to C-terminus: UDP-glycosyltransferase 72E2 (481 aa).

Residue His18 is the Proton acceptor of the active site. An anthocyanidin is bound at residue His18. Asp111 acts as the Charge relay in catalysis. Residues Ala346, Gln348, His363, Trp366, Ser368, and Glu371 each coordinate UDP-alpha-D-glucose. Ala386 provides a ligand contact to an anthocyanidin. UDP-alpha-D-glucose contacts are provided by Glu387 and Gln388.

This sequence belongs to the UDP-glycosyltransferase family. As to expression, expressed in seedlings and roots.

It catalyses the reaction (E)-4-coumarate + UDP-alpha-D-glucose = 4-O-(beta-D-glucosyl)-trans-4-coumarate + UDP + H(+). It carries out the reaction (E)-coniferol + UDP-alpha-D-glucose = 4-O-(beta-D-glucosyl)-(E)-coniferol + UDP + H(+). The enzyme catalyses (E)-sinapyl alcohol + UDP-alpha-D-glucose = 4-O-(beta-D-glucosyl)-trans-4-sinapoyl alcohol + UDP + H(+). The catalysed reaction is (E)-sinapate + UDP-alpha-D-glucose = 4-O-(beta-D-glucosyl)-trans-sinapate + UDP + H(+). It catalyses the reaction (E)-coniferaldehyde + UDP-alpha-D-glucose = 4-O-(beta-D-glucosyl)-4-(E)-coniferyl aldehyde + UDP + H(+). It carries out the reaction (E)-sinapaldehyde + UDP-alpha-D-glucose = 4-O-(beta-D-glucosyl)-4-trans-sinapoyl aldehyde + UDP + H(+). Involved in the O-glucosylation of monolignols (alcohol monomers of lignin). Glucosylates coniferyl alcohol to form coniferyl alcohol 4-O-glucoside. Glucosylates sinapyl alcohol to form sinapyl alcohol 4-O-glucoside. Glucosylates coniferyl aldehyde to form coniferyl aldehyde 4-O-glucoside. Glucosylates sinapyl aldehyde to form sinapyl aldehyde 4-O-glucoside. Possesses low activity with sinapate and ferulate as substrates. The polypeptide is UDP-glycosyltransferase 72E2 (Arabidopsis thaliana (Mouse-ear cress)).